The sequence spans 818 residues: Glycerol-3-phosphate acyltransferase (818 aa).

Positions 308–313 (CHRSHM) match the HXXXXD motif motif.

It belongs to the GPAT/DAPAT family.

The protein localises to the cell inner membrane. The catalysed reaction is sn-glycerol 3-phosphate + an acyl-CoA = a 1-acyl-sn-glycero-3-phosphate + CoA. It participates in phospholipid metabolism; CDP-diacylglycerol biosynthesis; CDP-diacylglycerol from sn-glycerol 3-phosphate: step 1/3. The protein is Glycerol-3-phosphate acyltransferase of Alteromonas mediterranea (strain DSM 17117 / CIP 110805 / LMG 28347 / Deep ecotype).